We begin with the raw amino-acid sequence, 345 residues long: GTP 3',8-cyclase (345 aa).

Positions 10–236 (SHGRPLGVLR…QCVSSHWPLD (227 aa)) constitute a Radical SAM core domain. GTP is bound at residue arginine 19. 2 residues coordinate [4Fe-4S] cluster: cysteine 26 and cysteine 30. Tyrosine 32 provides a ligand contact to S-adenosyl-L-methionine. Cysteine 33 is a [4Fe-4S] cluster binding site. Arginine 65 is a binding site for GTP. Glycine 69 serves as a coordination point for S-adenosyl-L-methionine. Threonine 98 lines the GTP pocket. Position 123 (serine 123) interacts with S-adenosyl-L-methionine. Lysine 172 serves as a coordination point for GTP. Methionine 206 serves as a coordination point for S-adenosyl-L-methionine. [4Fe-4S] cluster-binding residues include cysteine 269 and cysteine 272. A GTP-binding site is contributed by 274-276 (RIR). Residue cysteine 286 participates in [4Fe-4S] cluster binding.

This sequence belongs to the radical SAM superfamily. MoaA family. In terms of assembly, monomer and homodimer. It depends on [4Fe-4S] cluster as a cofactor.

The catalysed reaction is GTP + AH2 + S-adenosyl-L-methionine = (8S)-3',8-cyclo-7,8-dihydroguanosine 5'-triphosphate + 5'-deoxyadenosine + L-methionine + A + H(+). It functions in the pathway cofactor biosynthesis; molybdopterin biosynthesis. Catalyzes the cyclization of GTP to (8S)-3',8-cyclo-7,8-dihydroguanosine 5'-triphosphate. The protein is GTP 3',8-cyclase of Synechococcus sp. (strain CC9902).